Reading from the N-terminus, the 229-residue chain is 7-cyano-7-deazaguanine synthase (229 aa).

Residue 8 to 18 (CSGGLDSSVIA) coordinates ATP. Positions 190, 203, 206, and 209 each coordinate Zn(2+).

The protein belongs to the QueC family. It depends on Zn(2+) as a cofactor.

The enzyme catalyses 7-carboxy-7-deazaguanine + NH4(+) + ATP = 7-cyano-7-deazaguanine + ADP + phosphate + H2O + H(+). Its pathway is purine metabolism; 7-cyano-7-deazaguanine biosynthesis. Functionally, catalyzes the ATP-dependent conversion of 7-carboxy-7-deazaguanine (CDG) to 7-cyano-7-deazaguanine (preQ(0)). The protein is 7-cyano-7-deazaguanine synthase of Methanopyrus kandleri (strain AV19 / DSM 6324 / JCM 9639 / NBRC 100938).